Reading from the N-terminus, the 679-residue chain is Shutoff protein (679 aa).

Positions 178–232 (LFDYLIGESQDPNDLDSEYKLAFTDEDLPQEGQAEKTKQRETLGAVATFGAVLLS) are binding to host EIF4G. Residues 235 to 353 (RLFTHPVVIK…ELAGANYAEA (119 aa)) enclose the RRM domain. Phosphotyrosine; by host is present on residues Tyr-252 and Tyr-564. Positions 552–679 (REKSILKRGG…SLQGTRRESS (128 aa)) are disordered. The segment covering 661-679 (PRQETAEKESLQGTRRESS) has biased composition (basic and acidic residues).

Belongs to the adenoviridae shutoff protein family. Monomer. Interacts with hexon protein; this interaction allows chaperoning and trimerization of hexon proteins. Interacts (via N-terminus) with host initiation factor EIF4G (via C-terminus). Interacts (via RRM domain) with viral mRNAs that contain the tripartite leader; this interaction allows ribosome shunting and expression of viral late mRNAs. Post-translationally, might be cleaved by the viral protease. Phosphorylated. Tyrosine phosphorylation enhances preferential binding to tripartite leader mRNAs and allows ribosome shunting. In terms of processing, methylated. Asymmetric dimethylation by host PRMT1 of the Arg/Gly-rich region may regulate shutoff protein binding to hexon and promote the capsid assembly in the nucleus.

The protein resides in the host cytoplasm. In terms of biological role, protein that inhibits host translation while promoting late viral translation by ribosome shunting. Blocks host cap-dependent translation by binding to eIF4G, displacing MKNK1 from cap initiation complexes and preventing EIF4E phosphorylation. Binds to the tripartite leader sequence of viral late mRNAs and recruits host eIF4G, PABPC1/poly-A binding protein and 40S ribosomes subunits on viral mRNAs, allowing ribosome shunting and efficient translation of late viral mRNAs even though conventional translation via ribosome scanning from the cap has been shut off in the host cell. During assembly, acts as a chaperone protein that helps hexon proteins assembly into trimers. The chain is Shutoff protein from Snake adenovirus serotype 1 (SnAdV-1).